The primary structure comprises 339 residues: Glycerol-3-phosphate dehydrogenase [NAD(P)+] (339 aa).

Ser13, Trp14, and Lys108 together coordinate NADPH. Sn-glycerol 3-phosphate-binding residues include Lys108, Gly139, and Ser141. Residue Ala143 coordinates NADPH. Residues Lys194, Asp247, Ser257, Arg258, and Asn259 each coordinate sn-glycerol 3-phosphate. The active-site Proton acceptor is the Lys194. NADPH is bound at residue Arg258. Positions 282 and 284 each coordinate NADPH.

This sequence belongs to the NAD-dependent glycerol-3-phosphate dehydrogenase family.

Its subcellular location is the cytoplasm. The enzyme catalyses sn-glycerol 3-phosphate + NAD(+) = dihydroxyacetone phosphate + NADH + H(+). It carries out the reaction sn-glycerol 3-phosphate + NADP(+) = dihydroxyacetone phosphate + NADPH + H(+). It functions in the pathway membrane lipid metabolism; glycerophospholipid metabolism. Functionally, catalyzes the reduction of the glycolytic intermediate dihydroxyacetone phosphate (DHAP) to sn-glycerol 3-phosphate (G3P), the key precursor for phospholipid synthesis. This Streptococcus mutans serotype c (strain ATCC 700610 / UA159) protein is Glycerol-3-phosphate dehydrogenase [NAD(P)+].